The sequence spans 172 residues: Adenine phosphoribosyltransferase (172 aa).

Belongs to the purine/pyrimidine phosphoribosyltransferase family. As to quaternary structure, homodimer.

The protein localises to the cytoplasm. It catalyses the reaction AMP + diphosphate = 5-phospho-alpha-D-ribose 1-diphosphate + adenine. The protein operates within purine metabolism; AMP biosynthesis via salvage pathway; AMP from adenine: step 1/1. In terms of biological role, catalyzes a salvage reaction resulting in the formation of AMP, that is energically less costly than de novo synthesis. This chain is Adenine phosphoribosyltransferase, found in Rippkaea orientalis (strain PCC 8801 / RF-1) (Cyanothece sp. (strain PCC 8801)).